An 898-amino-acid chain; its full sequence is Phosphoenolpyruvate carboxylase (898 aa).

Active-site residues include histidine 138 and lysine 561.

The protein belongs to the PEPCase type 1 family. Requires Mg(2+) as cofactor.

The enzyme catalyses oxaloacetate + phosphate = phosphoenolpyruvate + hydrogencarbonate. Functionally, forms oxaloacetate, a four-carbon dicarboxylic acid source for the tricarboxylic acid cycle. This chain is Phosphoenolpyruvate carboxylase, found in Streptococcus pneumoniae serotype 2 (strain D39 / NCTC 7466).